The chain runs to 228 residues: Biosynthetic peptidoglycan transglycosylase (228 aa).

A helical transmembrane segment spans residues 8 to 28 (GVAALLALFLLYQLWIFGHIV).

This sequence belongs to the glycosyltransferase 51 family.

Its subcellular location is the cell inner membrane. It carries out the reaction [GlcNAc-(1-&gt;4)-Mur2Ac(oyl-L-Ala-gamma-D-Glu-L-Lys-D-Ala-D-Ala)](n)-di-trans,octa-cis-undecaprenyl diphosphate + beta-D-GlcNAc-(1-&gt;4)-Mur2Ac(oyl-L-Ala-gamma-D-Glu-L-Lys-D-Ala-D-Ala)-di-trans,octa-cis-undecaprenyl diphosphate = [GlcNAc-(1-&gt;4)-Mur2Ac(oyl-L-Ala-gamma-D-Glu-L-Lys-D-Ala-D-Ala)](n+1)-di-trans,octa-cis-undecaprenyl diphosphate + di-trans,octa-cis-undecaprenyl diphosphate + H(+). The protein operates within cell wall biogenesis; peptidoglycan biosynthesis. Peptidoglycan polymerase that catalyzes glycan chain elongation from lipid-linked precursors. The polypeptide is Biosynthetic peptidoglycan transglycosylase (Laribacter hongkongensis (strain HLHK9)).